A 215-amino-acid chain; its full sequence is Urease accessory protein UreG (215 aa).

Residue 15–22 (GPVGSGKT) coordinates GTP.

This sequence belongs to the SIMIBI class G3E GTPase family. UreG subfamily. Homodimer. UreD, UreF and UreG form a complex that acts as a GTP-hydrolysis-dependent molecular chaperone, activating the urease apoprotein by helping to assemble the nickel containing metallocenter of UreC. The UreE protein probably delivers the nickel.

It is found in the cytoplasm. In terms of biological role, facilitates the functional incorporation of the urease nickel metallocenter. This process requires GTP hydrolysis, probably effectuated by UreG. The polypeptide is Urease accessory protein UreG (Alcanivorax borkumensis (strain ATCC 700651 / DSM 11573 / NCIMB 13689 / SK2)).